Consider the following 336-residue polypeptide: Cyclin-H1-1 (336 aa).

A2 bears the N-acetylalanine mark. Residues 297 to 336 (KSCLGHSSSHDESKKREKRSKHKSHRSSNDTPNGAPPPIG) form a disordered region. Residues 312-322 (REKRSKHKSHR) are compositionally biased toward basic residues.

It belongs to the cyclin family. Interacts with CDKA-1, CDKD-2 and CDKD-3, but not CDKD-1 and CDKF-1.

The protein resides in the cytoplasm. The protein localises to the nucleus. Functionally, associates with CDK-2 and CDK-3 and activates the CDK kinases. This chain is Cyclin-H1-1 (CYCH1-1), found in Arabidopsis thaliana (Mouse-ear cress).